The chain runs to 230 residues: UPF0502 protein Oter_3715 (230 aa).

Belongs to the UPF0502 family.

This is UPF0502 protein Oter_3715 from Opitutus terrae (strain DSM 11246 / JCM 15787 / PB90-1).